The chain runs to 409 residues: Serine/threonine transporter SstT (409 aa).

A run of 9 helical transmembrane segments spans residues 17–37 (LVGQ…FFPA), 49–69 (FVSA…MASI), 83–103 (ILLL…IASF), 142–162 (ALIS…GIAF), 180–200 (VSLI…GLVA), 218–238 (LVVL…LIVF), 301–321 (GAAI…GIAV), 331–351 (VVAS…LLLI), and 357–377 (LFGI…IIAI).

This sequence belongs to the dicarboxylate/amino acid:cation symporter (DAACS) (TC 2.A.23) family.

The protein localises to the cell inner membrane. It catalyses the reaction L-serine(in) + Na(+)(in) = L-serine(out) + Na(+)(out). It carries out the reaction L-threonine(in) + Na(+)(in) = L-threonine(out) + Na(+)(out). Involved in the import of serine and threonine into the cell, with the concomitant import of sodium (symport system). This chain is Serine/threonine transporter SstT, found in Pseudomonas aeruginosa (strain LESB58).